We begin with the raw amino-acid sequence, 114 residues long: Small ribosomal subunit protein uS17 (114 aa).

Belongs to the universal ribosomal protein uS17 family. Part of the 30S ribosomal subunit.

One of the primary rRNA binding proteins, it binds specifically to the 5'-end of 16S ribosomal RNA. The chain is Small ribosomal subunit protein uS17 from Aeropyrum pernix (strain ATCC 700893 / DSM 11879 / JCM 9820 / NBRC 100138 / K1).